The chain runs to 468 residues: UDP-N-acetylmuramate--L-alanine ligase (468 aa).

An ATP-binding site is contributed by 121 to 127 (GSHGKTT).

Belongs to the MurCDEF family.

The protein resides in the cytoplasm. It carries out the reaction UDP-N-acetyl-alpha-D-muramate + L-alanine + ATP = UDP-N-acetyl-alpha-D-muramoyl-L-alanine + ADP + phosphate + H(+). The protein operates within cell wall biogenesis; peptidoglycan biosynthesis. Functionally, cell wall formation. This Borreliella burgdorferi (strain ATCC 35210 / DSM 4680 / CIP 102532 / B31) (Borrelia burgdorferi) protein is UDP-N-acetylmuramate--L-alanine ligase.